We begin with the raw amino-acid sequence, 579 residues long: Glutamine--tRNA ligase (579 aa).

A 'HIGH' region motif is present at residues 41 to 51 (PEPNGYLHIGH). ATP-binding positions include 42–44 (EPN) and 48–54 (HIGHAKA). 2 residues coordinate L-glutamine: Asp74 and Tyr218. ATP contacts are provided by residues Thr237, 285-286 (RL), and 293-295 (MSK). Positions 292–296 (VMSKR) match the 'KMSKS' region motif.

It belongs to the class-I aminoacyl-tRNA synthetase family. As to quaternary structure, monomer.

The protein localises to the cytoplasm. The enzyme catalyses tRNA(Gln) + L-glutamine + ATP = L-glutaminyl-tRNA(Gln) + AMP + diphosphate. The polypeptide is Glutamine--tRNA ligase (Xanthomonas oryzae pv. oryzae (strain MAFF 311018)).